The chain runs to 392 residues: Ceramide synthase 5 (392 aa).

Over 1–46 (MATAAQGPLSLLWGWLWSERFWLPENVSWADLEGPADGYGYPRGRH) the chain is Lumenal. Asn-26 carries N-linked (GlcNAc...) asparagine glycosylation. A helical membrane pass occupies residues 47–67 (ILSVFPLAAGIFFVRLLFERF). The homeobox-like stretch occupies residues 75–136 (CIGIEDSGPY…RHRRNQDKPP (62 aa)). Positions 139–340 (TKFCESMWRF…IARIALKALI (202 aa)) constitute a TLC domain. Helical transmembrane passes span 148 to 168 (FTFY…SPWF), 183 to 203 (LSSG…SLMF), 214 to 234 (FLIM…SYIN), and 272 to 292 (LFVI…PFWI). A Last loop motif motif is present at residues 299-309 (ESWEIIGPYAS). Residues 311-331 (WLLNGLLLTLQLLHVIWSYLI) form a helical membrane-spanning segment. At 332-392 (ARIALKALIR…HMGGSYWAEE (61 aa)) the chain is on the cytoplasmic side. The segment at 349 to 392 (RSDVESSSEEEDVTTCTKSPCDSSSSNGANRVNGHMGGSYWAEE) is disordered. Polar residues predominate over residues 362 to 378 (TTCTKSPCDSSSSNGAN).

Interacts with PAQR4; the interaction regulates the stability and activity of CERS5 and is inhibited in presence of ceramides. Phosphorylated at the C-terminus by CK2.

The protein localises to the endoplasmic reticulum membrane. It carries out the reaction a sphingoid base + hexadecanoyl-CoA = an N-hexadecanoyl-sphingoid base + CoA + H(+). It catalyses the reaction sphinganine + hexadecanoyl-CoA = N-hexadecanoylsphinganine + CoA + H(+). The enzyme catalyses hexadecasphinganine + hexadecanoyl-CoA = N-hexadecanoylhexadecasphinganine + CoA + H(+). The catalysed reaction is sphing-4-enine + hexadecanoyl-CoA = N-hexadecanoylsphing-4-enine + CoA + H(+). It carries out the reaction 2-hydroxyhexadecanoyl-CoA + sphinganine = N-(2-hydroxyhexadecanoyl)-sphinganine + CoA + H(+). It catalyses the reaction sphinganine + tetradecanoyl-CoA = N-(tetradecanoyl)-sphinganine + CoA + H(+). The enzyme catalyses sphinganine + octadecanoyl-CoA = N-(octadecanoyl)-sphinganine + CoA + H(+). The catalysed reaction is sphinganine + (9Z)-octadecenoyl-CoA = N-(9Z-octadecenoyl)-sphinganine + CoA + H(+). It carries out the reaction a fatty acyl-CoA + sphing-4-enine = an N-acylsphing-4-enine + CoA + H(+). The protein operates within lipid metabolism; sphingolipid metabolism. With respect to regulation, inhibited by fumonisin B1. Its function is as follows. Ceramide synthase that catalyzes the transfer of the acyl chain from acyl-CoA to a sphingoid base, with high selectivity toward palmitoyl-CoA (hexadecanoyl-CoA; C16:0-CoA). Can use other acyl donors, but with less efficiency. N-acylates sphinganine and sphingosine bases to form dihydroceramides and ceramides in de novo synthesis and salvage pathways, respectively. Plays a role in de novo ceramide synthesis and surfactant homeostasis in pulmonary epithelia. In Homo sapiens (Human), this protein is Ceramide synthase 5.